Reading from the N-terminus, the 592-residue chain is MKGPITFLLQLGAVYTSIASACKLSDLPILSAHGSYGSNQCIAFGGEQAVIDRLIDPQACDIPKLIEATADQLQDGLTKGCFTSVDLVKVRITLQTPYRQGNVLIIVVVQTYVARIAEVNSTVRAVTEINPDALTIAKQMDNERKMGKLRGPLHGLPIVIKNNIFTDDKMSSTAGSYAIFGARTSADATVATKLREAGLVIMGKSGASQWANFRSLNSTNGWSAYGGQVTAAYIKNQDPSGSSSGSGVASDLGLAFATLGTETSGSIVSPADKSNIVGLKPTVGLTSRRFVVPISERQDTVGPMARSVKDAAYLLQVIAGKDSNDNYTSAIPFDTIPDYVKACDINALKGKRIGVPRNVIKIFGSPQTVVDQFNQALAVMKKAGAIIVENTDFTSFAEFAQSPIPDDILYADSLTNLPAFFKQLKVNPHNITDLESLRRFTQHHRLEEYPSRDTARWDIALQKGIKNTDPKFWPMYQKNVKFGNEGGILGALRRHKLDAAVLPTDLSPYIPALIGSPIITVPMGVYPNGTKVNHDRELVTSGPGIPIGIGFMGDLWSEEKLIGLAYAFEQKTHARPKLKRFIQPKKEVKGIL.

The N-terminal stretch at 1–21 (MKGPITFLLQLGAVYTSIASA) is a signal peptide. Asparagine 120 carries an N-linked (GlcNAc...) asparagine glycan. Lysine 161 serves as the catalytic Charge relay system. Asparagine 217 carries an N-linked (GlcNAc...) asparagine glycan. The Charge relay system role is filled by serine 242. Substrate contacts are provided by residues serine 242 and 263–266 (TSGS). The active-site Acyl-ester intermediate is the serine 266. N-linked (GlcNAc...) asparagine glycosylation is found at asparagine 326, asparagine 430, and asparagine 528.

The protein belongs to the amidase family.

The protein resides in the secreted. This Arthroderma benhamiae (strain ATCC MYA-4681 / CBS 112371) (Trichophyton mentagrophytes) protein is Putative amidase ARB_02965.